The chain runs to 334 residues: 2,3-bisphosphoglycerate-dependent phosphoglycerate mutase 1 (334 aa).

The N-terminal 48 residues, M1–K48, are a transit peptide targeting the chloroplast. Residues R84–N91, T97–G98, R134, E188–Y191, K199, R215–R216, and G259–N260 each bind substrate. H85 (tele-phosphohistidine intermediate) is an active-site residue. E188 serves as the catalytic Proton donor/acceptor.

It belongs to the phosphoglycerate mutase family. BPG-dependent PGAM subfamily.

Its subcellular location is the plastid. The protein localises to the chloroplast. The catalysed reaction is (2R)-2-phosphoglycerate = (2R)-3-phosphoglycerate. Its pathway is carbohydrate degradation; glycolysis; pyruvate from D-glyceraldehyde 3-phosphate: step 3/5. Functionally, catalyzes the interconversion of 2-phosphoglycerate and 3-phosphoglycerate. In Arabidopsis thaliana (Mouse-ear cress), this protein is 2,3-bisphosphoglycerate-dependent phosphoglycerate mutase 1.